Reading from the N-terminus, the 406-residue chain is LIM/homeobox protein Lhx1 (406 aa).

2 LIM zinc-binding domains span residues 4–54 (CAGC…CKND) and 63–117 (CAGC…CKED). Disordered stretches follow at residues 128-189 (NSLH…TIKA) and 294-372 (DFFP…SAEV). The segment covering 137-148 (SDPSLSPDSQDP) has biased composition (low complexity). Positions 151 to 167 (DDAKDSESANVSDKEGG) are enriched in basic and acidic residues. Phosphoserine is present on Ser162. Positions 180–239 (RRGPRTTIKAKQLETLKAAFAATPKPTRHIREQLAQETGLNMRVIQVWFQNRRSKERRMK) form a DNA-binding region, homeobox. The span at 315–327 (PSSGPSGTPLGGL) shows a compositional bias: low complexity. Pro residues predominate over residues 352-362 (GDSPSPEPSLP).

In terms of assembly, interacts with LDB1 via the tandem LIM domains.

The protein resides in the nucleus. Potential transcription factor. May play a role in early mesoderm formation and later in lateral mesoderm differentiation and neurogenesis. This Mesocricetus auratus (Golden hamster) protein is LIM/homeobox protein Lhx1 (Lhx1).